The chain runs to 147 residues: Leghemoglobin (147 aa).

A Globin domain is found at 2-147; it reads GFTADQEALV…LASAIKKAMS (146 aa). Nitrated tyrosine occurs at positions 25 and 30. Residue Ser-45 participates in heme b binding. At Ser-45 the chain carries Phosphoserine. An O2-binding site is contributed by His-62. 3 residues coordinate heme b: Lys-65, His-94, and Lys-97. Tyr-135 is subject to Nitrated tyrosine.

This sequence belongs to the plant globin family. In terms of assembly, monomer. Post-translationally, nitrated in effective nodules and particularly in hypoxic conditions; this mechanism may play a protective role in the symbiosis by buffering toxic peroxynitrite NO(2)(-). Nitration level decrease during nodule senescence. In terms of processing, phosphorylation at Ser-45 disrupts the molecular environment of its porphyrin ring oxygen binding pocket, thus leading to a reduced oxygen consumption and to the delivery of oxygen O(2) to symbiosomes. In terms of tissue distribution, root nodules.

Its subcellular location is the cytoplasm. It is found in the cytosol. The protein localises to the nucleus. Its function is as follows. Leghemoglobin that reversibly binds oxygen O(2) through a pentacoordinated heme iron. In root nodules, facilitates the diffusion of oxygen to the bacteroids while preventing the bacterial nitrogenase from being inactivated by buffering dioxygen, nitric oxide and carbon monoxide, and promoting the formation of reactive oxygen species (ROS, e.g. H(2)O(2)). This role is essential for symbiotic nitrogen fixation (SNF). This Medicago sativa (Alfalfa) protein is Leghemoglobin (LB3).